The following is an 825-amino-acid chain: MSSSPVNVKKLKVSELKEELKKRRLSDKGLKAELMERLQAALDDEEAGGRPAMEPGNGSLDLGGDSAGRSGAGLEQEAAAGGDEEEEEEEEEEEGISALDGDQMELGEENGAAGAADSGPMEEEEAASEDENGDDQGFQEGEDELGDEEEGAGDENGHGEQQPQPPATQQQQPQQQRGAAKEAAGKSSGPTSLFAVTVAPPGARQGQQQAGGKKKAEGGGGGGRPGAPAAGDGKTEQKGGDKKRGVKRPREDHGRGYFEYIEENKYSRAKSPQPPVEEEDEHFDDTVVCLDTYNCDLHFKISRDRLSASSLTMESFAFLWAGGRASYGVSKGKVCFEMKVTEKIPVRHLYTKDIDIHEVRIGWSLTTSGMLLGEEEFSYGYSLKGIKTCNCETEDYGEKFDENDVITCFANFESDEVELSYAKNGQDLGVAFKISKEVLAGRPLFPHVLCHNCAVEFNFGQKEKPYFPIPEEYTFIQNVPLEDRVRGPKGPEEKKDCEVVMMIGLPGAGKTTWVTKHAAENPGKYNILGTNTIMDKMMVAGFKKQMADTGKLNTLLQRAPQCLGKFIEIAARKKRNFILDQTNVSAAAQRRKMCLFAGFQRKAVVVCPKDEDYKQRTQKKAEVEGKDLPEHAVLKMKGNFTLPEVAECFDEITYVELQKEEAQKLLEQYKEESKKALPPEKKQNTGSKKSNKNKSGKNQFNRGGGHRGRGGFNMRGGNFRGGAPGNRGGYNRRGNMPQRGGGGGGSGGIGYPYPRAPVFPGRGSYSNRGNYNRGGMPNRGNYNQNFRGRGNNRGYKNQSQGYNQWQQGQFWGQKPWSQHYHQGYY.

Ser2 bears the N-acetylserine; partial mark. Ser4 carries the post-translational modification Phosphoserine. The region spanning 8-42 (VKKLKVSELKEELKKRRLSDKGLKAELMERLQAAL) is the SAP domain. 2 positions are modified to N6-acetyllysine: Lys17 and Lys21. A disordered region spans residues 41 to 281 (ALDDEEAGGR…PQPPVEEEDE (241 aa)). Ser59 is subject to Phosphoserine; by PLK1. A Phosphoserine modification is found at Ser66. The span at 72–81 (AGLEQEAAAG) shows a compositional bias: low complexity. Composition is skewed to acidic residues over residues 82 to 95 (GDEEEEEEEEEEEG), 120 to 134 (PMEEEEAASEDENGD), and 140 to 153 (EGEDELGDEEEGAG). Low complexity predominate over residues 159 to 178 (GEQQPQPPATQQQQPQQQRG). N6-acetyllysine is present on Lys186. Ser187 is modified (ADP-ribosylserine). Positions 199-211 (APPGARQGQQQAG) are enriched in low complexity. The residue at position 215 (Lys215) is an N6-acetyllysine. A compositionally biased stretch (basic and acidic residues) spans 233–266 (GKTEQKGGDKKRGVKRPREDHGRGYFEYIEENKY). Position 255 is a citrulline (Arg255). Lys265 bears the N6-acetyllysine; alternate mark. Lys265 is covalently cross-linked (Glycyl lysine isopeptide (Lys-Gly) (interchain with G-Cter in SUMO1); alternate). A Glycyl lysine isopeptide (Lys-Gly) (interchain with G-Cter in SUMO2); alternate cross-link involves residue Lys265. Phosphotyrosine is present on Tyr266. Phosphoserine occurs at positions 267 and 271. The region spanning 267-464 (SRAKSPQPPV…VEFNFGQKEK (198 aa)) is the B30.2/SPRY domain. Thr286 carries the phosphothreonine modification. Lys352 bears the N6-acetyllysine mark. Residues 488–672 (PKGPEEKKDC…QKLLEQYKEE (185 aa)) form an ATPase domain region. Residue Lys495 forms a Glycyl lysine isopeptide (Lys-Gly) (interchain with G-Cter in SUMO2) linkage. 504–511 (GLPGAGKT) contacts ATP. Residues Lys516 and Lys524 each carry the N6-acetyllysine; alternate modification. Residues Lys516 and Lys524 each participate in a glycyl lysine isopeptide (Lys-Gly) (interchain with G-Cter in SUMO2); alternate cross-link. Position 532 is a phosphothreonine (Thr532). Lys536 is covalently cross-linked (Glycyl lysine isopeptide (Lys-Gly) (interchain with G-Cter in SUMO2)). Lys551 carries the N6-acetyllysine modification. Lys565 carries the N6-acetyllysine; alternate modification. Lys565 is covalently cross-linked (Glycyl lysine isopeptide (Lys-Gly) (interchain with G-Cter in SUMO2); alternate). Lys574 participates in a covalent cross-link: Glycyl lysine isopeptide (Lys-Gly) (interchain with G-Cter in SUMO2). A Phosphothreonine modification is found at Thr582. Glycyl lysine isopeptide (Lys-Gly) (interchain with G-Cter in SUMO2) cross-links involve residues Lys609 and Lys626. The actin-binding stretch occupies residues 611 to 626 (EDYKQRTQKKAEVEGK). N6-acetyllysine; alternate is present on Lys635. Lys635 participates in a covalent cross-link: Glycyl lysine isopeptide (Lys-Gly) (interchain with G-Cter in SUMO2); alternate. Glycyl lysine isopeptide (Lys-Gly) (interchain with G-Cter in SUMO2) cross-links involve residues Lys664 and Lys670. A compositionally biased stretch (basic and acidic residues) spans 671–683 (EESKKALPPEKKQ). Positions 671 to 749 (EESKKALPPE…GGGGGGSGGI (79 aa)) are disordered. Arg702 carries the post-translational modification Omega-N-methylarginine. Over residues 710–728 (GGFNMRGGNFRGGAPGNRG) the composition is skewed to gly residues. An RNA-binding RGG-box region spans residues 714–739 (MRGGNFRGGAPGNRGGYNRRGNMPQR). Residues Arg715, Arg720, and Arg727 each carry the asymmetric dimethylarginine modification. Arg733 and Arg739 each carry asymmetric dimethylarginine; alternate. 2 positions are modified to omega-N-methylarginine; alternate: Arg733 and Arg739. A Dimethylated arginine; in A2780 ovarian carcinoma cell line modification is found at Arg739. The segment covering 739–749 (RGGGGGGSGGI) has biased composition (gly residues). Arg755 and Arg762 each carry asymmetric dimethylarginine. Residues 769–799 (GNYNRGGMPNRGNYNQNFRGRGNNRGYKNQS) form a disordered region. A compositionally biased stretch (low complexity) spans 778-799 (NRGNYNQNFRGRGNNRGYKNQS). N6-acetyllysine; alternate is present on Lys814. A Glycyl lysine isopeptide (Lys-Gly) (interchain with G-Cter in SUMO2); alternate cross-link involves residue Lys814.

Oligomer (via ATPase domain and RNA-binding RGG-box region); oligomerization occurs upon ATP-binding in a chromatin-associated RNAs (caRNAs)- and transcription-dependent manner and is required for chromatin decompaction. ATP hydrolysis is required to cycle from an oligomeric to monomeric state to compact chromatin. Component of the coding region determinant (CRD)-mediated complex, composed of DHX9, HNRNPU, IGF2BP1, SYNCRIP and YBX1. Identified in the spliceosome C complex. Identified in a IGF2BP1-dependent mRNP granule complex containing untranslated mRNAs. Associates with heterogeneous nuclear ribonucleoprotein (hnRNP) particles. Associates (via middle region) with the C-terminal domain (CTD) RNA polymerase II (Pol II) holoenzyme; this association occurs in a RNA-independent manner. Associates (via middle region) with the core-TFIIH basal transcription factor complex; this association inhibits the CTD phosphorylation of RNA polymerase II holoenzyme by down-regulating TFIIH kinase activity. Associates with the telomerase holoenzyme complex. Associates with spindle microtubules (MTs) in a TPX2-dependent manner. Interacts (via C-terminus) with actin; this interaction is direct and mediates association with the phosphorylated CTD of RNA polymerase II and is disrupted in presence of the long non-coding H19 RNA. Interacts with AURKA. Interacts (via C-terminus) with CBX5; this interaction is, at least in part, RNA-dependent. Interacts with CR2. Interacts with CRY1. Interacts (via C-terminus) with EP300; this interaction enhances DNA-binding to nuclear scaffold/matrix attachment region (S/MAR) elements. Interacts with ERBB4. Interacts with GEMIN5. Interacts with IGF2BP1. Interacts with IGF2BP2 and IGF2BP3. Interacts with NCL; this interaction occurs during mitosis. Interacts (via C-terminus) with NR3C1 (via C-terminus). Interacts with PLK1; this interaction induces phosphorylation of HNRNPU at Ser-59 in mitosis. Interacts with POU3F4. Interacts with SMARCA4; this interaction occurs in embryonic stem cells and stimulates global Pol II-mediated transcription. Interacts (via C-terminus) with TOP2A; this interaction protects the topoisomerase TOP2A from degradation and positively regulates the relaxation of supercoiled DNA by TOP2A in a RNA-dependent manner. Interacts with TPX2; this interaction recruits HNRNPU to spindle microtubules (MTs). Interacts with UBQLN2. Interacts (via RNA-binding RGG-box region) with ZBTB7B; the interaction facilitates the recruitment of long non-coding RNA Blnc1 by ZBTB7B. Interacts with ERCC6. As to quaternary structure, (Microbial infection) Interacts with HIV-1 protein Rev. Cleaved at Asp-100 by CASP3 during T-cell apoptosis, resulting in a loss of DNA- and chromatin-binding activities. In terms of processing, extensively phosphorylated. Phosphorylated on Ser-59 by PLK1 and dephosphorylated by protein phosphatase 2A (PP2A) in mitosis. Post-translationally, arg-739 is dimethylated, probably to asymmetric dimethylarginine. Arg-733 is dimethylated, probably to asymmetric dimethylarginine. Citrullinated by PADI4. Widely expressed.

The protein localises to the nucleus. It is found in the nucleus matrix. It localises to the chromosome. The protein resides in the nucleus speckle. Its subcellular location is the cytoplasm. The protein localises to the cytoskeleton. It is found in the microtubule organizing center. It localises to the centrosome. The protein resides in the centromere. Its subcellular location is the kinetochore. The protein localises to the spindle. It is found in the spindle pole. It localises to the midbody. The protein resides in the cell surface. Its subcellular location is the cytoplasmic granule. Functionally, DNA- and RNA-binding protein involved in several cellular processes such as nuclear chromatin organization, telomere-length regulation, transcription, mRNA alternative splicing and stability, Xist-mediated transcriptional silencing and mitotic cell progression. Plays a role in the regulation of interphase large-scale gene-rich chromatin organization through chromatin-associated RNAs (caRNAs) in a transcription-dependent manner, and thereby maintains genomic stability. Required for the localization of the long non-coding Xist RNA on the inactive chromosome X (Xi) and the subsequent initiation and maintenance of X-linked transcriptional gene silencing during X-inactivation. Plays a role as a RNA polymerase II (Pol II) holoenzyme transcription regulator. Promotes transcription initiation by direct association with the core-TFIIH basal transcription factor complex for the assembly of a functional pre-initiation complex with Pol II in a actin-dependent manner. Blocks Pol II transcription elongation activity by inhibiting the C-terminal domain (CTD) phosphorylation of Pol II and dissociates from Pol II pre-initiation complex prior to productive transcription elongation. Positively regulates CBX5-induced transcriptional gene silencing and retention of CBX5 in the nucleus. Negatively regulates glucocorticoid-mediated transcriptional activation. Key regulator of transcription initiation and elongation in embryonic stem cells upon leukemia inhibitory factor (LIF) signaling. Involved in the long non-coding RNA H19-mediated Pol II transcriptional repression. Participates in the circadian regulation of the core clock component BMAL1 transcription. Plays a role in the regulation of telomere length. Plays a role as a global pre-mRNA alternative splicing modulator by regulating U2 small nuclear ribonucleoprotein (snRNP) biogenesis. Plays a role in mRNA stability. Component of the CRD-mediated complex that promotes MYC mRNA stabilization. Enhances the expression of specific genes, such as tumor necrosis factor TNFA, by regulating mRNA stability, possibly through binding to the 3'-untranslated region (UTR). Plays a role in mitotic cell cycle regulation. Involved in the formation of stable mitotic spindle microtubules (MTs) attachment to kinetochore, spindle organization and chromosome congression. Phosphorylation at Ser-59 by PLK1 is required for chromosome alignement and segregation and progression through mitosis. Also contributes to the targeting of AURKA to mitotic spindle MTs. Binds to double- and single-stranded DNA and RNA, poly(A), poly(C) and poly(G) oligoribonucleotides. Binds to chromatin-associated RNAs (caRNAs). Associates with chromatin to scaffold/matrix attachment region (S/MAR) elements in a chromatin-associated RNAs (caRNAs)-dependent manner. Binds to the Xist RNA. Binds the long non-coding H19 RNA. Binds to SMN1/2 pre-mRNAs at G/U-rich regions. Binds to small nuclear RNAs (snRNAs). Binds to the 3'-UTR of TNFA mRNA. Binds (via RNA-binding RGG-box region) to the long non-coding Xist RNA; this binding is direct and bridges the Xist RNA and the inactive chromosome X (Xi). Also negatively regulates embryonic stem cell differentiation upon LIF signaling. Required for embryonic development. Binds to brown fat long non-coding RNA 1 (Blnc1); facilitates the recruitment of Blnc1 by ZBTB7B required to drive brown and beige fat development and thermogenesis. In terms of biological role, (Microbial infection) Negatively regulates immunodeficiency virus type 1 (HIV-1) replication by preventing the accumulation of viral mRNA transcripts in the cytoplasm. This Homo sapiens (Human) protein is Heterogeneous nuclear ribonucleoprotein U.